Reading from the N-terminus, the 483-residue chain is Probable glycine dehydrogenase (decarboxylating) subunit 2 (483 aa).

Positions 1–24 are disordered; it reads MLIFDHSRPGRTAAAQLPATGGDL. Lys-264 carries the post-translational modification N6-(pyridoxal phosphate)lysine.

This sequence belongs to the GcvP family. C-terminal subunit subfamily. The glycine cleavage system is composed of four proteins: P, T, L and H. In this organism, the P 'protein' is a heterodimer of two subunits. Requires pyridoxal 5'-phosphate as cofactor.

It carries out the reaction N(6)-[(R)-lipoyl]-L-lysyl-[glycine-cleavage complex H protein] + glycine + H(+) = N(6)-[(R)-S(8)-aminomethyldihydrolipoyl]-L-lysyl-[glycine-cleavage complex H protein] + CO2. Functionally, the glycine cleavage system catalyzes the degradation of glycine. The P protein binds the alpha-amino group of glycine through its pyridoxal phosphate cofactor; CO(2) is released and the remaining methylamine moiety is then transferred to the lipoamide cofactor of the H protein. The chain is Probable glycine dehydrogenase (decarboxylating) subunit 2 from Thiobacillus denitrificans (strain ATCC 25259 / T1).